Here is a 108-residue protein sequence, read N- to C-terminus: Large ribosomal subunit protein uL22 (108 aa).

The protein belongs to the universal ribosomal protein uL22 family. As to quaternary structure, part of the 50S ribosomal subunit.

Its function is as follows. This protein binds specifically to 23S rRNA; its binding is stimulated by other ribosomal proteins, e.g. L4, L17, and L20. It is important during the early stages of 50S assembly. It makes multiple contacts with different domains of the 23S rRNA in the assembled 50S subunit and ribosome. Functionally, the globular domain of the protein is located near the polypeptide exit tunnel on the outside of the subunit, while an extended beta-hairpin is found that lines the wall of the exit tunnel in the center of the 70S ribosome. This chain is Large ribosomal subunit protein uL22, found in Nitratiruptor sp. (strain SB155-2).